The primary structure comprises 404 residues: Zinc finger TRAF-type-containing protein 1 (404 aa).

The segment covering 1 to 13 (MSGAEEAGGGGPA) has biased composition (gly residues). The segment at 1-22 (MSGAEEAGGGGPAAGPAGSVPA) is disordered. The RING-type; degenerate zinc-finger motif lies at 111 to 156 (CTVCLDLPKASVYQCTNGHLMCAGCFIHLLADARLKEEQATCPNCR). The TRAF-type zinc-finger motif lies at 152 to 225 (CPNCRCEISK…PWHGPFHELT (74 aa)).

Belongs to the ZFTRAF1 family. Interacts with LGALS3.

The protein localises to the cytoplasm. The protein resides in the perinuclear region. The protein is Zinc finger TRAF-type-containing protein 1 of Homo sapiens (Human).